A 406-amino-acid chain; its full sequence is Tyrosine--tRNA ligase (406 aa).

Residue Tyr35 participates in L-tyrosine binding. Positions 40–49 match the 'HIGH' region motif; it reads PTADSLHVGH. L-tyrosine is bound by residues Tyr168 and Gln172. Residues 228 to 232 carry the 'KMSKS' region motif; the sequence is KMGKT. Lys231 lines the ATP pocket. One can recognise an S4 RNA-binding domain in the interval 340-404; the sequence is STVLDIIAKT…RGKKNYNKIE (65 aa).

The protein belongs to the class-I aminoacyl-tRNA synthetase family. TyrS type 1 subfamily. Homodimer.

The protein localises to the cytoplasm. The enzyme catalyses tRNA(Tyr) + L-tyrosine + ATP = L-tyrosyl-tRNA(Tyr) + AMP + diphosphate + H(+). Catalyzes the attachment of tyrosine to tRNA(Tyr) in a two-step reaction: tyrosine is first activated by ATP to form Tyr-AMP and then transferred to the acceptor end of tRNA(Tyr). The protein is Tyrosine--tRNA ligase of Clostridium botulinum (strain Alaska E43 / Type E3).